The primary structure comprises 496 residues: Transmembrane protein 104 (496 aa).

The Cytoplasmic segment spans residues 1–10 (MAGEITETGE). Residues 11–31 (LYSPYVGLVYMFNLIVGTGAL) traverse the membrane as a helical segment. The Extracellular portion of the chain corresponds to 32-36 (TMPKA). Residues 37-57 (FATAGWLVSLVLLVFVGFMSF) form a helical membrane-spanning segment. The Cytoplasmic portion of the chain corresponds to 58–146 (VTTTFAMEAM…SMFFNKVGVN (89 aa)). The interval 81 to 100 (THKEEDDEDSSTASDSDLLS) is disordered. Positions 91–100 (STASDSDLLS) are enriched in low complexity. A helical membrane pass occupies residues 147-167 (LFYFCIITYLYGDLAIYAAAV). The Extracellular segment spans residues 168–204 (PVSLMQVTCSVSGNDSCGVDTDARYNDTDLCWGPLRR). N-linked (GlcNAc...) asparagine glycosylation is present at asparagine 193. Residues 205-225 (VDVYRIYLAIFTVLLGPFTFF) form a helical membrane-spanning segment. Over 226 to 233 (DVQKTKYL) the chain is Cytoplasmic. A helical membrane pass occupies residues 234–254 (QILTSMMRWIAFAIMIVLALV). Residues 255-265 (RIGKGQGEGHP) are Extracellular-facing. Residues 266–286 (PLANFLGVQNLFGVCVYSFMC) form a helical membrane-spanning segment. Residues 287-306 (QHSLPSLITPISSKRHITRL) are Cytoplasmic-facing. Residues 307–327 (LFLDYALILAFYGLLSFTAIF) form a helical membrane-spanning segment. Over 328–354 (CFRGDSLMDMYTLNFARCDVVGLAAVR) the chain is Extracellular. A helical transmembrane segment spans residues 355–375 (FFLGLFPVFTISTNFPIIAVT). Residues 376-397 (LRNNWKTLFHREGGTYPWVVDR) lie on the Cytoplasmic side of the membrane. A helical membrane pass occupies residues 398–418 (VVFPTITLVPPILVAFCTHDL). The Extracellular segment spans residues 419-421 (ESL). Residues 422 to 442 (VAITGAYAGTGIQYVIPAFLV) traverse the membrane as a helical segment. Residues 443–470 (YLCRKDTQLTFGYGTVNKHRSPFRHTFW) lie on the Cytoplasmic side of the membrane. A helical membrane pass occupies residues 471-491 (VAFVLLWAFSCFFFVTAYIVL). The Extracellular segment spans residues 492-496 (KETQL).

The protein belongs to the TMEM104 family.

It localises to the membrane. The chain is Transmembrane protein 104 (Tmem104) from Mus musculus (Mouse).